A 328-amino-acid chain; its full sequence is MSTKNFRVSDGDWICPDKKCGNVNFARRTSCNRCGREKTTEAKMMKAGGTEIGKTLAEKSRGLFSANDWQCKTCSNVNWARRSECNMCNTPKYAKLEERTGYGGGFNERENVEYIEREESDGEYDEFGRKKKKYRGKAVGPASILKEVEDKESEGEEEDEDEDLSKYKLDEDEDEDDADLSKYNLDASEEEDSNKKKSNRRSRSKSRSSHSRSSSRSSSPSSSRSRSRSRSRSSSSSQSRSRSTSRERSRSRGSKSSSRSHRGSSSPRKRSYSSSSSSPERNRKRSRSRSSSTGDPKKRRTRSRSPERHHRSSSGSSHSGSRSSSKKK.

The residue at position 9 (Ser-9) is a Phosphoserine. Residues 9–40 (SDGDWICPDKKCGNVNFARRTSCNRCGREKTT) form a RanBP2-type 1 zinc finger. Residues Lys-18, Lys-54, and Lys-92 each carry the N6-acetyllysine modification. The RanBP2-type 2 zinc-finger motif lies at 65–94 (SANDWQCKTCSNVNWARRSECNMCNTPKYA). The disordered stretch occupies residues 117–328 (REESDGEYDE…SGSRSSSKKK (212 aa)). 5 positions are modified to phosphoserine: Ser-120, Ser-153, Ser-181, Ser-188, and Ser-193. Residues 150–163 (DKESEGEEEDEDED) are compositionally biased toward acidic residues. A required for nuclear targeting region spans residues 151 to 328 (KESEGEEEDE…SGSRSSSKKK (178 aa)). Positions 196-210 (KKSNRRSRSKSRSSH) are enriched in basic residues. Composition is skewed to low complexity over residues 211–224 (SRSS…SSSR) and 232–242 (RSSSSSQSRSR). Composition is skewed to basic residues over residues 251–271 (SRGS…RKRS) and 297–312 (KKRR…HHRS). The segment covering 313 to 328 (SSGSSHSGSRSSSKKK) has biased composition (low complexity).

It belongs to the ZRANB2 family. As to quaternary structure, interacts with the C-terminal half of SNRNP70, the Arg/Ser-rich domain of AKAP17A as well as with U2AF1 and CLK1.

The protein resides in the nucleus. Splice factor required for alternative splicing of TRA2B/SFRS10 transcripts. Binds to ssRNA containing the consensus sequence 5'-AGGUAA-3'. May interfere with constitutive 5'-splice site selection. This Sus scrofa (Pig) protein is Zinc finger Ran-binding domain-containing protein 2 (ZRANB2).